The following is a 362-amino-acid chain: Isopentenyl-diphosphate delta-isomerase (362 aa).

A substrate-binding site is contributed by 5–6 (RK). Residues 63 to 65 (AMT), Ser93, and Asn122 contribute to the FMN site. Gln152 provides a ligand contact to substrate. Glu153 is a Mg(2+) binding site. Residues Lys184, Thr214, 259 to 261 (GIR), and 280 to 281 (AG) contribute to the FMN site.

This sequence belongs to the IPP isomerase type 2 family. As to quaternary structure, homooctamer. Dimer of tetramers. Requires FMN as cofactor. It depends on NADPH as a cofactor. Mg(2+) is required as a cofactor.

It localises to the cytoplasm. It catalyses the reaction isopentenyl diphosphate = dimethylallyl diphosphate. Its function is as follows. Involved in the biosynthesis of isoprenoids. Catalyzes the 1,3-allylic rearrangement of the homoallylic substrate isopentenyl (IPP) to its allylic isomer, dimethylallyl diphosphate (DMAPP). The sequence is that of Isopentenyl-diphosphate delta-isomerase from Nocardia farcinica (strain IFM 10152).